Here is a 326-residue protein sequence, read N- to C-terminus: Probable iron chelatin transport system permease protein jhp_0822 (326 aa).

The next 10 membrane-spanning stretches (helical) occupy residues 7 to 27 (IALA…ESLS), 64 to 84 (ILAL…QTIL), 91 to 111 (PFLL…IAVV), 113 to 133 (SNIA…VLAM), 142 to 162 (LSLV…AGAI), 164 to 184 (FFVI…SLSL), 187 to 207 (YKDC…LFLL), 241 to 261 (VASA…LVIP), 275 to 295 (LLLS…VVAK), and 301 to 321 (DLPV…WLLF).

It belongs to the binding-protein-dependent transport system permease family. FecCD subfamily.

The protein resides in the cell inner membrane. Its function is as follows. Part of a binding-protein-dependent transport system for an iron chelatin; probably responsible for the translocation of the substrate across the membrane. This Helicobacter pylori (strain J99 / ATCC 700824) (Campylobacter pylori J99) protein is Probable iron chelatin transport system permease protein jhp_0822.